The sequence spans 559 residues: MRPQELLLLLLMLKWSLAHTEDPAFPHLGDSSQPLPRPCPWRCSCPRDDTVDCAGLDLRIFPDNITRAARHLSLQNNQLRELPYNELSRLSGLRTLDLHSNLITSEGLPDEAFESLNQLENFYVAHNKLSVAPQFLPRSLRVADLAANEVVEIFPLTFGEKPALRSVYLHNNRLRNTGLPPNTFHGSEVITTLSLSSNQLSYLPPSLPASLERLHLQNNLISKVPRGALSLQTHLRELYLQHNQLTDSGLDATTFSKLSSLEYLDLSHNQLATVPEGLPGTLTILHLGRNCIRHVEAVRLHKARGLRYLLLQHNKLGASALPKGTLRPLRALHTLHLYGNKLERVPPALPRHLQALVMPHNHVAALGARDLVSARALAELNLAYNSLASAHVHPSAFRRLRALRSLDLAGNQLTRLPEGLPASLRSLRLQRNQLRTLEPEQLAGLNKLRELNLAHNRLRVGDIGPGTWHELQALKVLDLSHNELSFVPPDLPEALEELYLQANRISHVGPEAFLSTPHLRALFLRANRLHMTSIRAEALQGLTHLRVVDTAENPEQVLV.

A signal peptide spans methionine 1 to threonine 20. The N-linked (GlcNAc...) asparagine glycan is linked to asparagine 64. LRR repeat units follow at residues threonine 66–arginine 89, leucine 90–serine 115, asparagine 117–serine 139, leucine 140–glutamate 160, lysine 161–glycine 186, glutamate 188–proline 208, alanine 209–leucine 231, threonine 233–lysine 257, leucine 258–threonine 281, threonine 283–lysine 302, alanine 303–proline 328, leucine 329–histidine 352, glutamine 354–serine 373, alanine 374–arginine 399, leucine 400–serine 423, arginine 425–glycine 444, leucine 445–glutamate 470, leucine 471–alanine 494, glutamate 496–serine 515, and proline 517–glycine 541.

Belongs to the small leucine-rich proteoglycan (SLRP) family. SLRP class V subfamily. Post-translationally, N-glycosylated. Detected in bone where it is expressed in osteoblasts and newly formed bone matrix (at protein level). Also expressed weakly in osteoclasts (at protein level). Expressed strongly in calvaria, lung and femur, and weakly in kidney.

The protein localises to the secreted. It localises to the extracellular space. It is found in the extracellular matrix. The protein is Podocan-like protein 1 of Mus musculus (Mouse).